A 432-amino-acid chain; its full sequence is MWRGVGMVVQQFINRIRNCPLARDIIKKFFIPVIKERKNIEKEVEDILKVLRKNYCSGEYANKDCICAWFKFFEDVGRLHEALELKAFWEIIFPNHLNDLSESLQLFISNYAYMRPFGSSYSSIRVRIHGFIGAVCIDRNFNLHNNTWISNICNCYENNLRMLGLGFYTSDTLDPRYNINPSCNINSTTTNKCGLLYIISNTQITASLVSYLLNLLRNGNIYDAYNFLIRIRGVGDKIACLFLRDISIIHNLMLYGDCRDLLYKPIDRVVKKVIEELVKCKCKLNYNFDINEVLEKFDYTECRCIQKLRKNAKIDSNDFKTLYPYKIFLYEYSKKCKLDQRYVEMGMWFFNSKVAKYYNRRLCKYTIQEACKDLIKRLRKAINNTNIRYIGNNQFEININGKIIIVSEDELIDLILKGEIEIYDELLDIIFF.

This is an uncharacterized protein from Methanocaldococcus jannaschii (strain ATCC 43067 / DSM 2661 / JAL-1 / JCM 10045 / NBRC 100440) (Methanococcus jannaschii).